Consider the following 156-residue polypeptide: Ribosomal RNA large subunit methyltransferase H (156 aa).

S-adenosyl-L-methionine is bound by residues Leu73, Gly104, and Leu123–Leu128.

This sequence belongs to the RNA methyltransferase RlmH family. In terms of assembly, homodimer.

The protein localises to the cytoplasm. It carries out the reaction pseudouridine(1915) in 23S rRNA + S-adenosyl-L-methionine = N(3)-methylpseudouridine(1915) in 23S rRNA + S-adenosyl-L-homocysteine + H(+). Functionally, specifically methylates the pseudouridine at position 1915 (m3Psi1915) in 23S rRNA. This Edwardsiella ictaluri (strain 93-146) protein is Ribosomal RNA large subunit methyltransferase H.